The sequence spans 418 residues: CinA-like protein (418 aa).

This sequence belongs to the CinA family.

The sequence is that of CinA-like protein from Cyanothece sp. (strain PCC 7425 / ATCC 29141).